A 515-amino-acid polypeptide reads, in one-letter code: Arabinose import ATP-binding protein AraG 2 (515 aa).

Residues 1-22 form a disordered region; it reads MTMQTMTAASGHDAEAGTPPDG. ABC transporter domains lie at 25–260 and 260–511; these read LALD…MVGR and RSIE…LIKL. 57-64 contacts ATP; that stretch reads GENGAGKS.

It belongs to the ABC transporter superfamily. Arabinose importer (TC 3.A.1.2.2) family. As to quaternary structure, the complex is composed of two ATP-binding proteins (AraG), two transmembrane proteins (AraH) and a solute-binding protein (AraF).

Its subcellular location is the cell inner membrane. It carries out the reaction L-arabinose(out) + ATP + H2O = L-arabinose(in) + ADP + phosphate + H(+). Functionally, part of the ABC transporter complex AraFGH involved in arabinose import. Responsible for energy coupling to the transport system. This chain is Arabinose import ATP-binding protein AraG 2, found in Burkholderia cenocepacia (strain HI2424).